An 87-amino-acid polypeptide reads, in one-letter code: Putative defensin-like protein 84 (87 aa).

The first 27 residues, 1–27 (MTTKMVSSHRLLTLMVFALLLIPMISG), serve as a signal peptide directing secretion. Intrachain disulfides connect C32-C73, C36-C54, C42-C71, and C46-C72.

It belongs to the DEFL family.

The protein localises to the secreted. The polypeptide is Putative defensin-like protein 84 (Arabidopsis thaliana (Mouse-ear cress)).